Reading from the N-terminus, the 277-residue chain is Basic leucine zipper 9 (277 aa).

A disordered region spans residues 73–141 (ADSPVSANKP…ESAKRSRRRK (69 aa)). Ser-100 is modified (phosphoserine). A compositionally biased stretch (polar residues) spans 109–118 (AGQSEMTNDP). Residues 120 to 183 (DLKRIRRMNS…RSAGTNNRVL (64 aa)) form the bZIP domain. Residues 122-141 (KRIRRMNSNRESAKRSRRRK) form a basic motif region. The short motif at 124 to 131 (IRRMNSNR) is the Nuclear localization signal element. The tract at residues 148–162 (LETQVDSLKGDNSTL) is leucine-zipper.

Belongs to the bZIP family. As to quaternary structure, homodimer. Interacts with BZIP1, BZIP2, BZIP10, BZIP11, BZIP25, BZIP44, BZIP53 and BZIP63. Phosphorylated. Expressed in roots, shoots, stems, young leaves, and flowers, mostly in vascular tissues (e.g. phloem).

It localises to the nucleus. Functionally, transcription factor. The sequence is that of Basic leucine zipper 9 (BZIP9) from Arabidopsis thaliana (Mouse-ear cress).